A 237-amino-acid polypeptide reads, in one-letter code: Sugar fermentation stimulation protein homolog (237 aa).

Belongs to the SfsA family.

In Pseudomonas putida (strain W619), this protein is Sugar fermentation stimulation protein homolog.